The following is a 471-amino-acid chain: MNPNQKLFALSGVAIALSVLNLLIGISNVGLNVSLHLKGEGVKQENNLTCTTITQNNTTVVENTYVNNTTIINKGTNLKAPNYLLLNKSLCSVEGWVVIAKDNAIRFGESEQIIVTREPYVSCDPSGCKMYALHQGTTIRNKHSNGTIHDRTTFRGLISTPLGTPPTVSNSDFICVGWSSTSCHDGVGRMTICIQGNNDNATATVYYNRRLTTTIKTWAKNILRTQESECVCYNGTCAVVMTDGPASSQAYTKIMYFHKGLIIKEEPLRGSARHIEECSCYGHDQKVSCVCRDNWQGANRPIIEIDMSTLEHTSRCVCTGVLTDTSRPGDKPNGDCSNPITGSPGAPGVKGFGFLNGDNTWLGRTISPRSRSGFEMLKIPNAETDPNSRIIERQEIVDNSNWSGYSGSFIDCWDEANECYNPCFYVELIRGRPEEAKYVWWTSNSLIALCGSPVSVGSGSFPDGAQIQYFS.

Topologically, residues 1 to 6 (MNPNQK) are intravirion. Residues 7-27 (LFALSGVAIALSVLNLLIGIS) traverse the membrane as a helical segment. Residues 11-33 (SGVAIALSVLNLLIGISNVGLNV) are involved in apical transport and lipid raft association. Residues 28–471 (NVGLNVSLHL…PDGAQIQYFS (444 aa)) are Virion surface-facing. Residues Asn-32, Asn-47, Asn-56, Asn-57, Asn-67, Asn-68, and Asn-87 are each glycosylated (N-linked (GlcNAc...) asparagine; by host). The hypervariable stalk region stretch occupies residues 36-87 (HLKGEGVKQENNLTCTTITQNNTTVVENTYVNNTTIINKGTNLKAPNYLLLN). Residues 90–471 (LCSVEGWVVI…PDGAQIQYFS (382 aa)) are head of neuraminidase. 8 cysteine pairs are disulfide-bonded: Cys-91–Cys-419, Cys-123–Cys-128, Cys-183–Cys-230, Cys-232–Cys-237, Cys-278–Cys-291, Cys-280–Cys-289, Cys-318–Cys-336, and Cys-423–Cys-450. Residue Arg-117 coordinates substrate. An N-linked (GlcNAc...) asparagine; by host glycan is attached at Asn-145. Asp-150 functions as the Proton donor/acceptor in the catalytic mechanism. Position 151 (Arg-151) interacts with substrate. N-linked (GlcNAc...) asparagine; by host glycosylation is found at Asn-200 and Asn-234. Position 276–277 (276–277 (EE)) interacts with substrate. Arg-292 serves as a coordination point for substrate. 3 residues coordinate Ca(2+): Asp-293, Gly-297, and Asp-324. Substrate is bound at residue Arg-371. The N-linked (GlcNAc...) asparagine; by host glycan is linked to Asn-401. Tyr-405 functions as the Nucleophile in the catalytic mechanism.

It belongs to the glycosyl hydrolase 34 family. Homotetramer. The cofactor is Ca(2+). N-glycosylated.

The protein resides in the virion membrane. It is found in the host apical cell membrane. The enzyme catalyses Hydrolysis of alpha-(2-&gt;3)-, alpha-(2-&gt;6)-, alpha-(2-&gt;8)- glycosidic linkages of terminal sialic acid residues in oligosaccharides, glycoproteins, glycolipids, colominic acid and synthetic substrates.. Its activity is regulated as follows. Inhibited by the neuraminidase inhibitors zanamivir (Relenza) and oseltamivir (Tamiflu). These drugs interfere with the release of progeny virus from infected cells and are effective against all influenza strains. Resistance to neuraminidase inhibitors is quite rare. In terms of biological role, catalyzes the removal of terminal sialic acid residues from viral and cellular glycoconjugates. Cleaves off the terminal sialic acids on the glycosylated HA during virus budding to facilitate virus release. Additionally helps virus spread through the circulation by further removing sialic acids from the cell surface. These cleavages prevent self-aggregation and ensure the efficient spread of the progeny virus from cell to cell. Otherwise, infection would be limited to one round of replication. Described as a receptor-destroying enzyme because it cleaves a terminal sialic acid from the cellular receptors. May facilitate viral invasion of the upper airways by cleaving the sialic acid moieties on the mucin of the airway epithelial cells. Likely to plays a role in the budding process through its association with lipid rafts during intracellular transport. May additionally display a raft-association independent effect on budding. Plays a role in the determination of host range restriction on replication and virulence. Sialidase activity in late endosome/lysosome traffic seems to enhance virus replication. In Aves (Horse), this protein is Neuraminidase.